We begin with the raw amino-acid sequence, 173 residues long: Archaemetzincin (173 aa).

A Zn(2+)-binding site is contributed by His-130. Residue Glu-131 is the Proton acceptor of the active site. Residues His-134, His-140, Cys-141, Cys-146, Cys-165, and Cys-168 each contribute to the Zn(2+) site.

It belongs to the peptidase M54 family. Monomer. Zn(2+) serves as cofactor.

In terms of biological role, probable zinc metalloprotease whose natural substrate is unknown. The chain is Archaemetzincin from Halobacterium salinarum (strain ATCC 29341 / DSM 671 / R1).